The sequence spans 400 residues: Enoyl-[acyl-carrier-protein] reductase [NADH] 1 (400 aa).

NAD(+)-binding positions include 48 to 53, 74 to 75, 111 to 112, and 139 to 140; these read GASSGY, FE, DA, and LA. Residue Tyr-225 participates in substrate binding. The Proton donor role is filled by Tyr-235. Residues Lys-244 and 273-275 each bind NAD(+); that span reads VVT.

It belongs to the TER reductase family. As to quaternary structure, monomer.

The catalysed reaction is a 2,3-saturated acyl-[ACP] + NAD(+) = a (2E)-enoyl-[ACP] + NADH + H(+). The protein operates within lipid metabolism; fatty acid biosynthesis. In terms of biological role, involved in the final reduction of the elongation cycle of fatty acid synthesis (FAS II). Catalyzes the reduction of a carbon-carbon double bond in an enoyl moiety that is covalently linked to an acyl carrier protein (ACP). The protein is Enoyl-[acyl-carrier-protein] reductase [NADH] 1 of Vibrio vulnificus (strain CMCP6).